Here is a 354-residue protein sequence, read N- to C-terminus: Ferrochelatase (354 aa).

Residues His-204 and Glu-306 each coordinate Fe cation.

Belongs to the ferrochelatase family.

The protein localises to the cytoplasm. The enzyme catalyses heme b + 2 H(+) = protoporphyrin IX + Fe(2+). The protein operates within porphyrin-containing compound metabolism; protoheme biosynthesis; protoheme from protoporphyrin-IX: step 1/1. Functionally, catalyzes the ferrous insertion into protoporphyrin IX. The polypeptide is Ferrochelatase (Coxiella burnetii (strain Dugway 5J108-111)).